The primary structure comprises 470 residues: Serine hydroxymethyltransferase, cytosolic (470 aa).

Residues 1-11 (MSAYALSQSHR) are compositionally biased toward polar residues. Residues 1–23 (MSAYALSQSHRQLTEGHLKDTDP) are disordered. At Ser2 the chain carries N-acetylserine. Over residues 12–23 (QLTEGHLKDTDP) the composition is skewed to basic and acidic residues. Lys249 is modified (N6-(pyridoxal phosphate)lysine).

Belongs to the SHMT family. Homotetramer. The cofactor is pyridoxal 5'-phosphate.

It localises to the cytoplasm. The catalysed reaction is (6R)-5,10-methylene-5,6,7,8-tetrahydrofolate + glycine + H2O = (6S)-5,6,7,8-tetrahydrofolate + L-serine. Its pathway is one-carbon metabolism; tetrahydrofolate interconversion. In terms of biological role, interconversion of serine and glycine. In Candida albicans (strain SC5314 / ATCC MYA-2876) (Yeast), this protein is Serine hydroxymethyltransferase, cytosolic (SHM2).